Consider the following 573-residue polypeptide: Solute carrier family 41 member 2 (573 aa).

Topologically, residues M1–Q162 are extracellular. 2 positions are modified to phosphoserine: S136 and S137. A helical transmembrane segment spans residues I163–I183. Over V184–E195 the chain is Cytoplasmic. The chain crosses the membrane as a helical span at residues V196–S216. At R217–Q245 the chain is on the extracellular side. A helical membrane pass occupies residues V246–P266. At E267–S282 the chain is on the cytoplasmic side. A helical membrane pass occupies residues V283 to G303. Residues S304–N313 lie on the Extracellular side of the membrane. A helical transmembrane segment spans residues V314–I334. Residues S335–Y347 are Cytoplasmic-facing. Residues I348–A368 traverse the membrane as a helical segment. Residues K369–V376 lie on the Extracellular side of the membrane. Residues L377–I397 traverse the membrane as a helical segment. Over L398–N406 the chain is Cytoplasmic. Residues L407–I427 traverse the membrane as a helical segment. Residues Q428 to A469 are Extracellular-facing. Residues Q470–M490 traverse the membrane as a helical segment. The Cytoplasmic portion of the chain corresponds to K491–T498. Residues I499–I519 traverse the membrane as a helical segment. Residues A520–T543 lie on the Extracellular side of the membrane. The helical transmembrane segment at A544 to I564 threads the bilayer. Topologically, residues G565–D573 are cytoplasmic.

Belongs to the SLC41A transporter family.

The protein localises to the cell membrane. It catalyses the reaction Mg(2+)(in) = Mg(2+)(out). The catalysed reaction is Mn(2+)(in) = Mn(2+)(out). The enzyme catalyses Co(2+)(in) = Co(2+)(out). It carries out the reaction Ni(2+)(in) = Ni(2+)(out). It catalyses the reaction Fe(2+)(in) = Fe(2+)(out). Its function is as follows. Acts as a plasma-membrane magnesium transporter. Can also mediate the transport of other divalent metal cations in an order of Ba(2+) &gt; Ni(2+) &gt; Co(2+) &gt; Fe(2+) &gt; Mn(2+). This chain is Solute carrier family 41 member 2 (SLC41A2), found in Macaca fascicularis (Crab-eating macaque).